A 196-amino-acid polypeptide reads, in one-letter code: Venom platylysin (196 aa).

The protein belongs to the redulysin-like family. Expressed by the venom gland.

It localises to the secreted. Probable insecticidal toxin that has been detected in a semi-pure insecticidal fraction. This Platymeris biguttatus (Two-spotted assassin bug) protein is Venom platylysin.